Here is a 336-residue protein sequence, read N- to C-terminus: GTPase Obg (336 aa).

An Obg domain is found at M1 to I159. Residues A160–D327 enclose the OBG-type G domain. GTP-binding positions include G166 to S173, F191 to H195, D212 to G215, S279 to D282, and S308 to V310. Mg(2+) contacts are provided by S173 and T193.

The protein belongs to the TRAFAC class OBG-HflX-like GTPase superfamily. OBG GTPase family. Monomer. The cofactor is Mg(2+).

It localises to the cytoplasm. An essential GTPase which binds GTP, GDP and possibly (p)ppGpp with moderate affinity, with high nucleotide exchange rates and a fairly low GTP hydrolysis rate. Plays a role in control of the cell cycle, stress response, ribosome biogenesis and in those bacteria that undergo differentiation, in morphogenesis control. This chain is GTPase Obg, found in Sinorhizobium medicae (strain WSM419) (Ensifer medicae).